A 395-amino-acid polypeptide reads, in one-letter code: Elongation factor Tu (395 aa).

The region spanning 10-204 is the tr-type G domain; sequence KPHVNIGTIG…AIDNWIPLPQ (195 aa). Residues 19–26 are G1; sequence GHVDHGKT. 19-26 provides a ligand contact to GTP; sequence GHVDHGKT. A Mg(2+)-binding site is contributed by Thr-26. A G2 region spans residues 60-64; the sequence is GITIN. The G3 stretch occupies residues 81 to 84; that stretch reads DCPG. GTP contacts are provided by residues 81-85 and 136-139; these read DCPGH and NKVD. The interval 136–139 is G4; the sequence is NKVD. Residues 174–176 are G5; it reads SAL.

Belongs to the TRAFAC class translation factor GTPase superfamily. Classic translation factor GTPase family. EF-Tu/EF-1A subfamily. In terms of assembly, monomer.

It is found in the cytoplasm. The catalysed reaction is GTP + H2O = GDP + phosphate + H(+). Its function is as follows. GTP hydrolase that promotes the GTP-dependent binding of aminoacyl-tRNA to the A-site of ribosomes during protein biosynthesis. The chain is Elongation factor Tu from Azobacteroides pseudotrichonymphae genomovar. CFP2.